A 103-amino-acid polypeptide reads, in one-letter code: Probable protease inhibitor Egf0.4a (103 aa).

Positions 1-22 (MMSEKFALVLLVACIAFIGIET) are cleaved as a signal peptide. A TIL domain is found at 35 to 87 (CGENEAYDSMRRGCEKRCDDHNPTFCFKFTTVCWCEKGYVRDKSDTCIKVEDC).

Belongs to the polydnaviridae EGF-like motif protein family.

The protein is Probable protease inhibitor Egf0.4a (O4) of Microplitis demolitor (Parasitoid wasp).